Consider the following 278-residue polypeptide: MTQMNYTGKVKRVAIIANGKYQSKRVASKLFSVFKDDPDFYLSKKNPDIVISIGGDGMLLSAFHMYEKELDKVRFVGIHTGHLGFYTDYRDFEVDKLIDNLRKDKGEQISYPILKVAITLDDGRVVKARALNEATVKRIEKTMVADVIINHVKFESFRGDGISVSTPTGSTAYNKSLGGAVLHPTIEALQLTEISSLNNRVFRTLGSSIIIPKKDKIELVPKRLGIYTISIDNKTYQLKNVTKVEYFIDDEKIHFVSSPSHTSFWERVKDAFIGEIDS.

The active-site Proton acceptor is the aspartate 56. NAD(+)-binding positions include 56 to 57 (DG), 132 to 133 (NE), arginine 158, aspartate 160, and 171 to 176 (TAYNKS).

The protein belongs to the NAD kinase family. It depends on a divalent metal cation as a cofactor.

Its subcellular location is the cytoplasm. The enzyme catalyses NAD(+) + ATP = ADP + NADP(+) + H(+). Involved in the regulation of the intracellular balance of NAD and NADP, and is a key enzyme in the biosynthesis of NADP. Catalyzes specifically the phosphorylation on 2'-hydroxyl of the adenosine moiety of NAD to yield NADP. This is NAD kinase from Streptococcus pyogenes serotype M1.